The sequence spans 487 residues: Phenylalanine--tRNA ligase alpha subunit (487 aa).

L-phenylalanine contacts are provided by residues T319, 361–363 (QVE), and Y401. Residue E403 coordinates Mg(2+). F427 is an L-phenylalanine binding site.

This sequence belongs to the class-II aminoacyl-tRNA synthetase family. Phe-tRNA synthetase alpha subunit type 2 subfamily. Tetramer of two alpha and two beta subunits. Mg(2+) is required as a cofactor.

Its subcellular location is the cytoplasm. It carries out the reaction tRNA(Phe) + L-phenylalanine + ATP = L-phenylalanyl-tRNA(Phe) + AMP + diphosphate + H(+). The chain is Phenylalanine--tRNA ligase alpha subunit (phesA) from Dictyostelium discoideum (Social amoeba).